The chain runs to 861 residues: DNA mismatch repair protein MutS (861 aa).

616-623 contacts ATP; sequence GPNMGGKS.

Belongs to the DNA mismatch repair MutS family.

This protein is involved in the repair of mismatches in DNA. It is possible that it carries out the mismatch recognition step. This protein has a weak ATPase activity. The polypeptide is DNA mismatch repair protein MutS (Haemophilus influenzae (strain PittEE)).